Consider the following 440-residue polypeptide: Xylose isomerase (440 aa).

Catalysis depends on residues His99 and Asp102. The Mg(2+) site is built by Glu230, Glu266, His269, Asp294, Asp305, Asp307, and Asp337.

The protein belongs to the xylose isomerase family. As to quaternary structure, homotetramer. Mg(2+) is required as a cofactor.

The protein localises to the cytoplasm. It catalyses the reaction alpha-D-xylose = alpha-D-xylulofuranose. This is Xylose isomerase from Halalkalibacterium halodurans (strain ATCC BAA-125 / DSM 18197 / FERM 7344 / JCM 9153 / C-125) (Bacillus halodurans).